The chain runs to 248 residues: uncharacterized protein (248 aa).

This is an uncharacterized protein from Sinorhizobium fredii (strain NBRC 101917 / NGR234).